A 623-amino-acid chain; its full sequence is Low affinity potassium transport system protein Kup (623 aa).

Helical transmembrane passes span 9–29 (LPAITLAAIGVVYGDIGTSPL), 49–69 (VFGFLSLIFWLLVFVVSFKYL), 101–121 (VLVILGLIGGSFFYGEVVITP), 137–157 (PSLDPYIVPLSIVVLTLLFMI), 163–183 (GMVGKLFAPIMLAWFLVLAVL), 212–232 (AVSFAALGAVVLSITGVEALY), 247–267 (WFSVVLPSLVLNYFGQGALLL), 276–296 (PFFLLAPDWALIPMLILATLA), 337–357 (IYIPVVNWLLYFAVVIVIVSF), 363–383 (LAAAYGIAVTGTMVLTSILFA), 395–415 (ILVGLMVVAFLCVDVPLFSAN), and 419–439 (LFSGGWLPLSLGLVMFIIMTT).

Belongs to the HAK/KUP transporter (TC 2.A.72) family.

It localises to the cell inner membrane. It carries out the reaction K(+)(in) + H(+)(in) = K(+)(out) + H(+)(out). In terms of biological role, responsible for the low-affinity transport of potassium into the cell. Likely operates as a K(+):H(+) symporter. The polypeptide is Low affinity potassium transport system protein Kup (Cronobacter sakazakii (strain ATCC BAA-894) (Enterobacter sakazakii)).